The primary structure comprises 654 residues: MKEPLIEISALNRIFQAGEQQVAVLKDIDLKIYPGEMVAIMGTSGSGKSTLMNILGCLDRPSSGSYRISGRETRELDDNELAALRRNHFGFIFQRYHLLSHLDALGNAELAAVYAGVSKSSRRERAHMLLSRLGLEERCEHKPSQLSGGQQQRVSIARALMNGGEVILADEPTGALDTRSGQEVMAVLRELHQQGHTVIIVTHDPLVAAKAERIIEIQDGEIIADRVNPASELETSASSATDAASAAGRKETRGAWLGRFSEAFKMAWVAMTSHRLRTLLTMLGIIIGITAVVSIVAIGEGAKQKVISDINSIGVNTIEIFPGKDWGDERAAAIDTLVAADVEALQAQPFVDSVTPSIVNSQQLRYRNVAVNVNINAVGEQFFRVKGLVVAEGRPLLREDIRTQAQVVVIDSNTRGKLFAAEDDPIGKVILIGASPWTVIGVAEDKSDMFGGGGNLSVWMPYSSATTRLIGRQNFSSIIVRTPDGLSSAVAEQGIIRLLTVRHGVKDFFTFSTDSILKAVEKTTTTLTLLVSSIAVISLIVGGIGVMNIMLVSVTERTREIGIRMAVGARQSDILQQFLIEAVMVCLIGGGIGILLSFGVGALFSLLVQDMQMSFSVTAIVSAVVCSSLIGVLFGFLPARNAARLDPIEALARE.

An ABC transporter domain is found at 6–244; sequence IEISALNRIF…TSASSATDAA (239 aa). 42 to 49 is an ATP binding site; sequence GTSGSGKS. Helical transmembrane passes span 279 to 299, 534 to 554, 584 to 604, and 617 to 637; these read LLTM…VAIG, IAVI…LVSV, MVCL…GALF, and VTAI…FGFL.

It belongs to the ABC transporter superfamily. Macrolide exporter (TC 3.A.1.122) family. As to quaternary structure, homodimer. Part of the tripartite efflux system MacAB-TolC, which is composed of an inner membrane transporter, MacB, a periplasmic membrane fusion protein, MacA, and an outer membrane component, TolC. The complex forms a large protein conduit and can translocate molecules across both the inner and outer membranes. Interacts with MacA.

The protein localises to the cell inner membrane. In terms of biological role, part of the tripartite efflux system MacAB-TolC. MacB is a non-canonical ABC transporter that contains transmembrane domains (TMD), which form a pore in the inner membrane, and an ATP-binding domain (NBD), which is responsible for energy generation. Confers resistance against macrolides. The protein is Macrolide export ATP-binding/permease protein MacB of Hahella chejuensis (strain KCTC 2396).